We begin with the raw amino-acid sequence, 125 residues long: Small ribosomal subunit protein eS8 (125 aa).

The segment at 1-34 (MQWQGRSVRKSTGGRYSPSRGKRRREIGSAPAET) is disordered.

Belongs to the eukaryotic ribosomal protein eS8 family. As to quaternary structure, part of the 30S ribosomal subunit.

The sequence is that of Small ribosomal subunit protein eS8 from Methanospirillum hungatei JF-1 (strain ATCC 27890 / DSM 864 / NBRC 100397 / JF-1).